A 337-amino-acid chain; its full sequence is uncharacterized protein (337 aa).

Positions 248 to 276 (NELKAETTIQVLREQLRQEKKLKEQVLSL) form a coiled coil. The tract at residues 285–337 (GGRGEEFGKPDETPSSASVGDDNFPSSTNHTFEARRRPSSLSSGGALKPSKIL) is disordered. The span at 287 to 296 (RGEEFGKPDE) shows a compositional bias: basic and acidic residues. Residues 297 to 315 (TPSSASVGDDNFPSSTNHT) show a composition bias toward polar residues.

This is an uncharacterized protein from Invertebrate iridescent virus 3 (IIV-3).